Reading from the N-terminus, the 896-residue chain is MEVQLGLGRVYPRPPSKTFRGAFQNLFQSVREVIQNPGPRHPEAASAAPPGARLQQQQLQQQETSPRRQQQQQQQPSEDGSPQVQSRGPTGYLALDEKQQPSQQQSAPECHPESGCTPEPGAASAASKGLQQQPPAPPDEDDSAAPSTLSLLGPTFPGLSSCSTDLKDILSEAGTMQLLQQQQQQQQQQEAVSEGNSSGRAREATGAPISSKDSYLGGSSTISDSAKELCKAVSVSMGLGVEALEHLSPGEQLRGDCMYAPLLTGPPSVRPTPCAPLAECKGSLLDDGPGKSNEETAEYSPFKAGYTKGLDSESLGCSSGGEAGGSGTLELPSALSLYKSGALDDVAAYPSRDYYNFPLALAGPPPPPPPPHPHARIKLENPLDYGSAWAAAAAQCRYGDLASLHGGGAPGPGSGSPSATSSSSWHTLFTAEESQLYGPCGGGGGGSAGEAGAVAPYGYTRPPQGLAGQEGDLAIPDIWYPGGVVSRVPYPSPSCVKSEMGPWMESYSGPYGDMRLEPTRDHVLPIDYYFPPQKTCLICGDEASGCHYGALTCGSCKVFFKRAAEGKQKYLCASRNDCTIDKFRRKNCPSCRLRKCYEAGMTLGARKLKKLGNLKLQEEGEASSATSPTEEPAQKLTVSHIEGYECQPIFLNVLEAIEPGVVCAGHDNNQPDSFAALLSSLNELGERQLVHVVKWAKALPGFRNLHVDDQMAVIQYSWMGLMVFAMGWRSFTNVNSRMLYFAPDLVFNEYRMHKSRMYSQCVRMRHLSQEFGWLQITPQEFLCMKALLLFSIIPVDGLKNQKFFDELRMNYIKELDRIIACKRKNPTSCSRRFYQLTKLLDSVQPIARELHQFTFDLLIKSHMVSVDFPEMMAEIISVQVPKILSGKVKPIYFHTQ.

The segment at 1-534 (MEVQLGLGRV…PIDYYFPPQK (534 aa)) is modulating. An interaction with ZNF318 region spans residues 1-563 (MEVQLGLGRV…GSCKVFFKRA (563 aa)). Disordered regions lie at residues 35–152 (QNPG…LSLL) and 178–218 (LLQQ…YLGG). Positions 54-78 (LQQQQLQQQETSPRRQQQQQQQPSE) are enriched in low complexity. Serine 65 carries the phosphoserine; by CDK9 modification. Serine 81 carries the post-translational modification Phosphoserine. Over residues 178-189 (LLQQQQQQQQQQ) the composition is skewed to low complexity. A compositionally biased stretch (polar residues) spans 190 to 199 (EAVSEGNSSG). Tyrosine 215 bears the Phosphotyrosine; by CSK mark. Serine 248 carries the phosphoserine modification. Phosphotyrosine; by CSK and TNK2 is present on tyrosine 259. 4 positions are modified to phosphotyrosine; by CSK: tyrosine 299, tyrosine 338, tyrosine 349, and tyrosine 354. Residue tyrosine 355 is modified to Phosphotyrosine; by CSK and TNK2. Lysine 378 participates in a covalent cross-link: Glycyl lysine isopeptide (Lys-Gly) (interchain with G-Cter in SUMO). At tyrosine 385 the chain carries Phosphotyrosine; by CSK. Lysine 497 participates in a covalent cross-link: Glycyl lysine isopeptide (Lys-Gly) (interchain with G-Cter in SUMO). Residues tyrosine 511 and tyrosine 528 each carry the phosphotyrosine; by CSK modification. The interaction with LPXN stretch occupies residues 528–895 (YYFPPQKTCL…GKVKPIYFHT (368 aa)). The nuclear receptor DNA-binding region spans 535 to 608 (TCLICGDEAS…AGMTLGARKL (74 aa)). 2 consecutive NR C4-type zinc fingers follow at residues 536 to 556 (CLICGDEASGCHYGALTCGSC) and 572 to 596 (CASRNDCTIDKFRRKNCPSCRLRKC). The tract at residues 548–638 (YGALTCGSCK…TEEPAQKLTV (91 aa)) is interaction with HIPK3. The tract at residues 568–895 (QKYLCASRND…GKVKPIYFHT (328 aa)) is interaction with CCAR1. The segment at 601-895 (MTLGARKLKK…GKVKPIYFHT (295 aa)) is interaction with KAT7. Residue serine 627 is modified to Phosphoserine; by STK4/MST1. One can recognise an NR LBD domain in the interval 645-876 (ECQPIFLNVL…DFPEMMAEII (232 aa)). Positions 682 and 729 each coordinate 17beta-hydroxy-5alpha-androstan-3-one. Glycyl lysine isopeptide (Lys-Gly) (interchain with G-Cter in ubiquitin) cross-links involve residues lysine 822 and lysine 824. Residue threonine 854 coordinates 17beta-hydroxy-5alpha-androstan-3-one. Tyrosine 892 is modified (phosphotyrosine; by CSK).

The protein belongs to the nuclear hormone receptor family. NR3 subfamily. As to quaternary structure, binds DNA as a homodimer. Part of a ternary complex containing AR, EFCAB6/DJBP and PARK7. Interacts with HIPK3 and NR0B2 in the presence of androgen. The ligand binding domain interacts with KAT7/HBO1 in the presence of dihydrotestosterone. Interacts with EFCAB6/DJBP, PQBP1, RANBP9, RBAK, SPDEF, SRA1, TGFB1I1 and RREB1. Interacts with ZMIZ1/ZIMP10 and ZMIZ2/ZMIP7 which both enhance its transactivation activity. Interacts with SLC30A9 and RAD54L2/ARIP4. Interacts with MACROD1 (via macro domain). Interacts via the ligand-binding domain with LXXLL and FXXLF motifs from NCOA1, NCOA2, NCOA3 and MAGEA11. Interacts (via nuclear receptor DNA binding domain and nuclear receptor ligand binding domain) with NCOA4. The AR N-terminal poly-Gln region binds Ran resulting in enhancement of AR-mediated transactivation. Ran-binding decreases as the poly-Gln length increases. Interacts with HIP1 (via coiled coil domain). Interacts (via ligand-binding domain) with TRIM68. Interacts with TNK2. Interacts with USP26. Interacts with RNF6. Interacts (regulated by RNF6 probably through polyubiquitination) with RNF14; regulates AR transcriptional activity. Interacts with PRMT2 and TRIM24. Interacts with RACK1. Interacts with RANBP10; this interaction enhances dihydrotestosterone-induced AR transcriptional activity. Interacts with PRPF6 in a hormone-independent way; this interaction enhances dihydrotestosterone-induced AR transcriptional activity. Interacts with STK4/MST1. Interacts with ZIPK/DAPK3. Interacts with LPXN. Interacts with MAK. Part of a complex containing AR, MAK and NCOA3. Interacts with CRY1. Interacts with CCAR1 and GATA2. Interacts with ZNF318. Interacts with BUD31. Interacts with ARID4A. Interacts with ARID4B. Interacts (via NR LBD domain) with ZBTB7A; the interaction is direct and androgen-dependent. Interacts with NCOR1. Interacts with NCOR2. Interacts with CRY2 in a ligand-dependent manner. Phosphorylated in prostate cancer cells in response to several growth factors including EGF. Phosphorylation is induced by c-Src kinase (CSK). Tyr-511 is one of the major phosphorylation sites and an increase in phosphorylation and Src kinase activity is associated with prostate cancer progression. Phosphorylation by TNK2 enhances the DNA-binding and transcriptional activity. Phosphorylation at Ser-65 by CDK9 regulates AR promoter selectivity and cell growth. In terms of processing, sumoylated on Lys-378 (major) and Lys-497. Ubiquitinated. Deubiquitinated by USP26. 'Lys-6' and 'Lys-27'-linked polyubiquitination by RNF6 modulates AR transcriptional activity and specificity. Post-translationally, palmitoylated by ZDHHC7 and ZDHHC21. Palmitoylation is required for plasma membrane targeting and for rapid intracellular signaling via ERK and AKT kinases and cAMP generation.

The protein resides in the nucleus. It is found in the cytoplasm. Steroid hormone receptors are ligand-activated transcription factors that regulate eukaryotic gene expression and affect cellular proliferation and differentiation in target tissues. Transcription factor activity is modulated by bound coactivator and corepressor proteins like ZBTB7A that recruits NCOR1 and NCOR2 to the androgen response elements/ARE on target genes, negatively regulating androgen receptor signaling and androgen-induced cell proliferation. Transcription activation is also down-regulated by NR0B2. Activated, but not phosphorylated, by HIPK3 and ZIPK/DAPK3. This Sus scrofa (Pig) protein is Androgen receptor (AR).